We begin with the raw amino-acid sequence, 384 residues long: uncharacterized protein (384 aa).

The segment at 1-116 is disordered; it reads MTEMPKKKFS…FPAAPPPMDS (116 aa). Basic and acidic residues-rich tracts occupy residues 14–70 and 78–95; these read ARGD…RAGD and RFKDKDRDKPRYGDDRPR. S-adenosyl-L-methionine is bound by residues Gly318, Ile338, and Leu347.

It belongs to the class IV-like SAM-binding methyltransferase superfamily. RNA methyltransferase TrmH family.

This is an uncharacterized protein from Synechocystis sp. (strain ATCC 27184 / PCC 6803 / Kazusa).